Reading from the N-terminus, the 271-residue chain is Neurexophilin-1 (271 aa).

Residues 1–21 form the signal peptide; sequence MQAACWYVLLLLQPTVYLVTC. Positions 22-97 are II; that stretch reads ANLTNGGKSE…WDWLRNSTDL (76 aa). Residues Asn-23, Asn-68, Asn-93, Asn-146, Asn-156, and Asn-162 are each glycosylated (N-linked (GlcNAc...) asparagine). The tract at residues 98-176 is III; sequence QEPRPRAKRR…LVPPTKIVEF (79 aa). An IV (linker domain) region spans residues 177-185; the sequence is DLAQQTVID. A v (Cys-rich) region spans residues 186–271; sequence AKDSKSFNCR…HSDTPYFPSG (86 aa).

The protein belongs to the neurexophilin family. May be proteolytically processed at the boundary between the N-terminal non-conserved and the central conserved domain in neuron-like cells.

The protein resides in the secreted. In terms of biological role, may be signaling molecules that resemble neuropeptides. Ligand for alpha-neurexins. The chain is Neurexophilin-1 (NXPH1) from Bos taurus (Bovine).